Here is an 865-residue protein sequence, read N- to C-terminus: AdoMet-dependent rRNA methyltransferase SPB1 (865 aa).

The S-adenosyl-L-methionine site is built by Gly-56, Trp-58, Asp-76, Asp-92, and Asp-117. Lys-157 serves as the catalytic Proton acceptor. Coiled-coil stretches lie at residues 358 to 400 (ESMD…VRMQ) and 462 to 492 (GETD…RKAA). 2 disordered regions span residues 370–396 (LEKL…QKDI) and 443–676 (VVAS…TKDG). Residues 386–396 (RKENERKQKDI) are compositionally biased toward basic and acidic residues. The segment covering 463-483 (ETDDESDEELDRLETELDDMY) has biased composition (acidic residues). Residues 484–497 (DQFRERKAASDAKY) show a composition bias toward basic and acidic residues. Positions 526–545 (ISDDSELEEESSGDSDDEDD) are enriched in acidic residues. The segment covering 556–566 (LDTTPSDNSGL) has biased composition (polar residues). The segment covering 600-609 (GEDEDADMED) has biased composition (acidic residues). Composition is skewed to basic and acidic residues over residues 610 to 627 (TVSK…ADKK) and 659 to 676 (KSGK…TKDG). Residues 762–789 (REAKGRKKMKAAQRLEKLKKKSDLLVNE) adopt a coiled-coil conformation.

It belongs to the class I-like SAM-binding methyltransferase superfamily. RNA methyltransferase RlmE family. SPB1 subfamily. As to quaternary structure, component of the nucleolar and nucleoplasmic pre-60S ribosomal particle.

The protein localises to the nucleus. It is found in the nucleolus. It catalyses the reaction a ribonucleotide in rRNA + S-adenosyl-L-methionine = a 2'-O-methylribonucleotide in rRNA + S-adenosyl-L-homocysteine + H(+). In terms of biological role, required for proper assembly of pre-ribosomal particles during the biogenesis of the 60S ribosomal subunit. The sequence is that of AdoMet-dependent rRNA methyltransferase SPB1 from Pyricularia oryzae (strain 70-15 / ATCC MYA-4617 / FGSC 8958) (Rice blast fungus).